A 262-amino-acid polypeptide reads, in one-letter code: Acyl-[acyl-carrier-protein]--UDP-N-acetylglucosamine O-acyltransferase (262 aa).

Belongs to the transferase hexapeptide repeat family. LpxA subfamily. In terms of assembly, homotrimer.

The protein resides in the cytoplasm. The catalysed reaction is a (3R)-hydroxyacyl-[ACP] + UDP-N-acetyl-alpha-D-glucosamine = a UDP-3-O-[(3R)-3-hydroxyacyl]-N-acetyl-alpha-D-glucosamine + holo-[ACP]. Its pathway is glycolipid biosynthesis; lipid IV(A) biosynthesis; lipid IV(A) from (3R)-3-hydroxytetradecanoyl-[acyl-carrier-protein] and UDP-N-acetyl-alpha-D-glucosamine: step 1/6. Its function is as follows. Involved in the biosynthesis of lipid A, a phosphorylated glycolipid that anchors the lipopolysaccharide to the outer membrane of the cell. This chain is Acyl-[acyl-carrier-protein]--UDP-N-acetylglucosamine O-acyltransferase, found in Paracidovorax citrulli (strain AAC00-1) (Acidovorax citrulli).